Consider the following 264-residue polypeptide: Glutamate racemase (264 aa).

Residues D10 to S11 and Y42 to G43 each bind substrate. Catalysis depends on C73, which acts as the Proton donor/acceptor. Residue N74–T75 coordinates substrate. C183 functions as the Proton donor/acceptor in the catalytic mechanism. T184 to H185 is a substrate binding site.

The protein belongs to the aspartate/glutamate racemases family.

The enzyme catalyses L-glutamate = D-glutamate. It participates in cell wall biogenesis; peptidoglycan biosynthesis. In terms of biological role, provides the (R)-glutamate required for cell wall biosynthesis. In Streptococcus agalactiae serotype III (strain NEM316), this protein is Glutamate racemase.